We begin with the raw amino-acid sequence, 251 residues long: Pyrroloquinoline-quinone synthase (251 aa).

The protein belongs to the PqqC family.

The catalysed reaction is 6-(2-amino-2-carboxyethyl)-7,8-dioxo-1,2,3,4,7,8-hexahydroquinoline-2,4-dicarboxylate + 3 O2 = pyrroloquinoline quinone + 2 H2O2 + 2 H2O + H(+). It functions in the pathway cofactor biosynthesis; pyrroloquinoline quinone biosynthesis. In terms of biological role, ring cyclization and eight-electron oxidation of 3a-(2-amino-2-carboxyethyl)-4,5-dioxo-4,5,6,7,8,9-hexahydroquinoline-7,9-dicarboxylic-acid to PQQ. The sequence is that of Pyrroloquinoline-quinone synthase from Pseudomonas savastanoi pv. phaseolicola (strain 1448A / Race 6) (Pseudomonas syringae pv. phaseolicola (strain 1448A / Race 6)).